A 379-amino-acid polypeptide reads, in one-letter code: Cobalt-precorrin-5B C(1)-methyltransferase (379 aa).

Belongs to the CbiD family.

The enzyme catalyses Co-precorrin-5B + S-adenosyl-L-methionine = Co-precorrin-6A + S-adenosyl-L-homocysteine. It participates in cofactor biosynthesis; adenosylcobalamin biosynthesis; cob(II)yrinate a,c-diamide from sirohydrochlorin (anaerobic route): step 6/10. Catalyzes the methylation of C-1 in cobalt-precorrin-5B to form cobalt-precorrin-6A. The chain is Cobalt-precorrin-5B C(1)-methyltransferase from Salmonella typhi.